The primary structure comprises 258 residues: Envelope glycoprotein L (258 aa).

Residues 1–31 (MYECMFFSHRLTIGFYIPLIVLTTMSSLSES) form the signal peptide. Residues 36-243 (QKTACTVAAI…ILYQASLSGP (208 aa)) enclose the gL betaherpesvirus-type domain. Cysteines 145 and 150 form a disulfide.

The protein belongs to the herpesviridae glycoprotein L (gL) family. Betaherpesvirinae gL subfamily. As to quaternary structure, interacts with glycoprotein H (gH); this interaction is necessary for the correct processing and cell surface expression of gH. Forms the envelope pentamer complex (PC) composed of gH, gL, UL128, UL130, and UL131A. The pentamer interacts with host NRP2. Forms the envelope trimer complex composed of gH, gL, and gO. The trimer interacts with host PDGFRA.

The protein localises to the virion membrane. It localises to the host cell membrane. The protein resides in the host Golgi apparatus. It is found in the host trans-Golgi network. Its function is as follows. The heterodimer glycoprotein H-glycoprotein L is required for the fusion of viral and plasma membranes leading to virus entry into the host cell. Acts as a functional inhibitor of gH and maintains gH in an inhibited form. Upon binding to host integrins, gL dissociates from gH leading to activation of the viral fusion glycoproteins gB and gH. In human cytomegalovirus, forms two distincts complexes to mediate viral entry, a trimer and a pentamer at the surface of the virion envelope. The gH-gL-gO trimer is required for infection in fibroblasts by interacting with host PDGFRA. The gH-gL-UL128-UL130-UL131A pentamer is essential for viral entry in epithelial, endothelial and myeloid cells via interaction with host NRP2. This is Envelope glycoprotein L from Guinea pig cytomegalovirus (strain 22122) (GPCMV).